The sequence spans 398 residues: Fatty-acid-binding protein 2 (398 aa).

The dodecanoate site is built by arginine 222, tyrosine 235, and serine 302.

This sequence belongs to the chalcone isomerase family. As to expression, expressed in developing cotyledons, young seedlings, roots, seeds, embryos, macrospores, preanthesis and tapetum. Restricted to developing and reproductive tissues.

It is found in the plastid. The protein localises to the chloroplast stroma. Functionally, fatty-acid-binding protein. Associates with saturated fatty acid. This chain is Fatty-acid-binding protein 2 (FAP2), found in Arabidopsis thaliana (Mouse-ear cress).